The following is a 140-amino-acid chain: METELMRIGVSLPDTLLSKFDEIIEKRGYSSRSEGIRDAIRSYISYYEWMGDIKGHRVGTVAVIYDHTKRGLSNALADIQHHYSHLIKSSVHIHLDHDNCFEVIVLDGDGEEIKELAEAIMALKGVKFSKLTTVASNEKI.

Residues His81, His92, His94, and Cys100 each coordinate Ni(2+).

This sequence belongs to the transcriptional regulatory CopG/NikR family. The cofactor is Ni(2+).

Functionally, transcriptional regulator. This chain is Putative nickel-responsive regulator 3, found in Methanosarcina acetivorans (strain ATCC 35395 / DSM 2834 / JCM 12185 / C2A).